The sequence spans 155 residues: 6,7-dimethyl-8-ribityllumazine synthase (155 aa).

Residues Phe-24, 58–60, and 82–84 each bind 5-amino-6-(D-ribitylamino)uracil; these read AFE and VII. Residue 87-88 participates in (2S)-2-hydroxy-3-oxobutyl phosphate binding; the sequence is ST. His-90 acts as the Proton donor in catalysis. Position 115 (Phe-115) interacts with 5-amino-6-(D-ribitylamino)uracil. Arg-129 is a binding site for (2S)-2-hydroxy-3-oxobutyl phosphate.

This sequence belongs to the DMRL synthase family.

The catalysed reaction is (2S)-2-hydroxy-3-oxobutyl phosphate + 5-amino-6-(D-ribitylamino)uracil = 6,7-dimethyl-8-(1-D-ribityl)lumazine + phosphate + 2 H2O + H(+). It functions in the pathway cofactor biosynthesis; riboflavin biosynthesis; riboflavin from 2-hydroxy-3-oxobutyl phosphate and 5-amino-6-(D-ribitylamino)uracil: step 1/2. Functionally, catalyzes the formation of 6,7-dimethyl-8-ribityllumazine by condensation of 5-amino-6-(D-ribitylamino)uracil with 3,4-dihydroxy-2-butanone 4-phosphate. This is the penultimate step in the biosynthesis of riboflavin. This Chlorobium phaeobacteroides (strain DSM 266 / SMG 266 / 2430) protein is 6,7-dimethyl-8-ribityllumazine synthase.